The primary structure comprises 462 residues: Bifunctional dihydrofolate reductase-thymidylate synthase (462 aa).

Positions 6 to 165 (TFSMVLAMTL…INYDYQHLIN (160 aa)) constitute a DHFR domain. Val10 lines the substrate pocket. Residues Ala12 and 18–24 (GIGYQNR) each bind NADP(+). Position 32 (Asp32) interacts with substrate. NADP(+)-binding positions include 49 to 51 (RKT) and 68 to 71 (ISKN). Ile101 is a substrate binding site. 102–109 (GGKRIFEE) contributes to the NADP(+) binding site. Thr122 lines the substrate pocket. Residues 180 to 462 (ENQYLDMITK…HDKIEMKMAV (283 aa)) are thymidylate synthase. Arg200 serves as a coordination point for dUMP. Cys345 is a catalytic residue. DUMP-binding positions include His346, 364–368 (QRSCD), Asn376, and 406–408 (HIY).

It in the N-terminal section; belongs to the dihydrofolate reductase family. This sequence in the C-terminal section; belongs to the thymidylate synthase family.

The catalysed reaction is (6S)-5,6,7,8-tetrahydrofolate + NADP(+) = 7,8-dihydrofolate + NADPH + H(+). It carries out the reaction dUMP + (6R)-5,10-methylene-5,6,7,8-tetrahydrofolate = 7,8-dihydrofolate + dTMP. It participates in cofactor biosynthesis; tetrahydrofolate biosynthesis; 5,6,7,8-tetrahydrofolate from 7,8-dihydrofolate: step 1/1. In terms of biological role, bifunctional enzyme. Involved in de novo dTMP biosynthesis. Key enzyme in folate metabolism. Catalyzes an essential reaction for de novo glycine and purine synthesis, DNA precursor synthesis, and for the conversion of dUMP to dTMP. This chain is Bifunctional dihydrofolate reductase-thymidylate synthase, found in Paramecium tetraurelia.